Consider the following 966-residue polypeptide: Regulator of G-protein signaling 3 (966 aa).

A PDZ domain is found at 18–95 (QITIRRGKDG…EIILLVWRVV (78 aa)). Positions 115–135 (THDLLSPPNKREKNCTHGAPV) are disordered. Omega-N-methylarginine is present on Arg167. Disordered regions lie at residues 403-618 (EADE…TGAV) and 637-704 (YSQL…RVQN). Polar residues-rich tracts occupy residues 527-548 (PETSTSKDSPPGQGSSPTTELP) and 576-594 (SSASVQKRLPSQESPSSLG). The segment covering 649–675 (GEDEDAEEGEEGGEGEEDEEDDTSDDN) has biased composition (acidic residues). The segment covering 676–686 (YGDRSEAKRSS) has biased composition (basic and acidic residues). Ser712, Ser715, Ser747, and Ser776 each carry phosphoserine. The disordered stretch occupies residues 806–830 (FRRRNESPGAQPASKTDKTTKSFKP). The segment covering 820 to 830 (KTDKTTKSFKP) has biased composition (basic and acidic residues). Positions 841–966 (SLEKLLLHKY…INQKKMSPPL (126 aa)) constitute an RGS domain.

As to quaternary structure, binds the GNB1-GNG2 heterodimer. Binds EFNB1 and EFNB2. Post-translationally, phosphorylated by cyclic GMP-dependent protein kinase. In terms of processing, ISGylated. As to expression, detected in embryos from E8.5-16.5 in cortical ventricular zone, dorsal root ganglia and cerebellar primordia. Isoform 3 is detected in testis and in spermatocytes from newborn mice. Levels increase and reach a maximum after 21 days; after this they decrease again. Long isoforms are widely expressed.

It localises to the cytoplasm. The protein resides in the cell membrane. Its subcellular location is the nucleus. Down-regulates signaling from heterotrimeric G-proteins by increasing the GTPase activity of the alpha subunits, thereby driving them into their inactive GDP-bound form. Down-regulates G-protein-mediated release of inositol phosphates and activation of MAP kinases. This chain is Regulator of G-protein signaling 3 (Rgs3), found in Mus musculus (Mouse).